A 221-amino-acid polypeptide reads, in one-letter code: Probable glutathione S-transferase parC (221 aa).

Residues 4 to 83 form the GST N-terminal domain; the sequence is EEVILLDFWP…YIEEVWKDKA (80 aa). Residues S14, K41, I55, and 67-68 contribute to the glutathione site; that span reads ES. A GST C-terminal domain is found at 90–214; the sequence is DPYDRAQARF…PKVLEFVKVL (125 aa).

The protein belongs to the GST superfamily. Phi family. As to expression, abundant in seedlings and roots. It is also found in the shoot tips, flowers and leaves.

The enzyme catalyses RX + glutathione = an S-substituted glutathione + a halide anion + H(+). Its function is as follows. Conjugation of reduced glutathione to a wide number of exogenous and endogenous hydrophobic electrophiles. The protein is Probable glutathione S-transferase parC (PARC) of Nicotiana tabacum (Common tobacco).